The primary structure comprises 470 residues: Small ribosomal subunit protein bS1m (470 aa).

Residues 436-470 (FKKIPMTAARLRGRYENSDSPSSPTMSGSSGYGLR) form a disordered region. Residues 453-464 (SDSPSSPTMSGS) show a composition bias toward low complexity.

It belongs to the bacterial ribosomal protein bS1 family. Component of the mitochondrial small ribosomal subunit (mt-SSU). Mature N.crassa 74S mitochondrial ribosomes consist of a small (37S) and a large (54S) subunit. The 37S small subunit contains a 16S ribosomal RNA (16S mt-rRNA) and 32 different proteins. The 54S large subunit contains a 23S rRNA (23S mt-rRNA) and 42 different proteins.

The protein resides in the mitochondrion. In terms of biological role, component of the mitochondrial ribosome (mitoribosome), a dedicated translation machinery responsible for the synthesis of mitochondrial genome-encoded proteins, including at least some of the essential transmembrane subunits of the mitochondrial respiratory chain. The mitoribosomes are attached to the mitochondrial inner membrane and translation products are cotranslationally integrated into the membrane. In Neurospora crassa (strain ATCC 24698 / 74-OR23-1A / CBS 708.71 / DSM 1257 / FGSC 987), this protein is Small ribosomal subunit protein bS1m (mrp51).